The chain runs to 366 residues: Galactoside alpha-(1,2)-fucosyltransferase 1 (366 aa).

Over 1-8 (MWPRSHRH) the chain is Cytoplasmic. Residues 9-25 (LCLAFLLVCVLSAISFL) form a helical; Signal-anchor for type II membrane protein membrane-spanning segment. Residues 26–366 (IHFHQDSIRH…LSPLWPLAEP (341 aa)) are Lumenal-facing. N-linked (GlcNAc...) asparagine glycans are attached at residues N66, N302, and N328.

It belongs to the glycosyltransferase 11 family.

The protein resides in the golgi apparatus. Its subcellular location is the golgi stack membrane. It catalyses the reaction a beta-D-galactosyl-(1-&gt;4)-N-acetyl-beta-D-glucosaminyl derivative + GDP-beta-L-fucose = an alpha-L-Fuc-(1-&gt;2)-beta-D-Gal-(1-&gt;4)-beta-D-GlcNAc derivative + GDP + H(+). The enzyme catalyses a ganglioside GA1 + GDP-beta-L-fucose = a ganglioside Fuc-GA1 + GDP + H(+). It carries out the reaction a beta-D-Gal-(1-&gt;3)-beta-D-GlcNAc-(1-&gt;3)-beta-D-Gal-(1-&gt;4)-beta-D-Glc-(1&lt;-&gt;1')-Cer(d18:1(4E)) + GDP-beta-L-fucose = alpha-L-fucosyl-(1-&gt;2)- beta-D-galactosyl-(1-&gt;3)-N-acetyl-beta-D-glucosaminyl-(1-&gt;3)-beta-D-galactosyl-(1-&gt;4)-beta-D-glucosyl-(1&lt;-&gt;1')-N-acylsphing-4-enine + GDP + H(+). The catalysed reaction is a neolactoside nLc4Cer(d18:1(4E)) + GDP-beta-L-fucose = a neolactoside IV(2)-alpha-Fuc-nLc4Cer(d18:1(4E)) + GDP + H(+). It catalyses the reaction a ganglioside GM1 + GDP-beta-L-fucose = a ganglioside Fuc-GM1 + GDP + H(+). The enzyme catalyses beta-D-galactosyl-(1-&gt;3)-N-acetyl-D-galactosamine + GDP-beta-L-fucose = alpha-L-fucosyl-(1-&gt;2)-beta-D-galactosyl-(1-&gt;3)-N-acetyl-D-galactosamine + GDP + H(+). It functions in the pathway protein modification; protein glycosylation. Catalyzes the transfer of L-fucose, from a guanosine diphosphate-beta-L-fucose, to the terminal galactose residue of glycoconjugates through an alpha(1,2) linkage leading to H antigen synthesis that is an intermediate substrate in the synthesis of ABO blood group antigens. H antigen is essential for maturation of the glomerular layer of the main olfactory bulb, in cell migration and early cell-cell contacts during tumor associated angiogenesis. Preferentially fucosylates soluble lactose and to a lesser extent fucosylates glycolipids gangliosides GA1 and GM1a. This chain is Galactoside alpha-(1,2)-fucosyltransferase 1, found in Saimiri boliviensis boliviensis (Bolivian squirrel monkey).